A 271-amino-acid chain; its full sequence is Shikimate dehydrogenase (NADP(+)) (271 aa).

Shikimate is bound by residues 14–16 and Thr-61; that span reads SRS. Lys-65 functions as the Proton acceptor in the catalytic mechanism. Shikimate is bound by residues Asn-86 and Asp-102. Residues 126–130, 149–154, and Met-213 contribute to the NADP(+) site; these read GAGGA and NRTFSR. Tyr-215 lines the shikimate pocket. Gly-238 contacts NADP(+).

Belongs to the shikimate dehydrogenase family. Homodimer.

The catalysed reaction is shikimate + NADP(+) = 3-dehydroshikimate + NADPH + H(+). The protein operates within metabolic intermediate biosynthesis; chorismate biosynthesis; chorismate from D-erythrose 4-phosphate and phosphoenolpyruvate: step 4/7. Its function is as follows. Involved in the biosynthesis of the chorismate, which leads to the biosynthesis of aromatic amino acids. Catalyzes the reversible NADPH linked reduction of 3-dehydroshikimate (DHSA) to yield shikimate (SA). The protein is Shikimate dehydrogenase (NADP(+)) of Histophilus somni (strain 129Pt) (Haemophilus somnus).